The following is a 519-amino-acid chain: Glucose-1-phosphate adenylyltransferase large subunit 2, chloroplastic/amyloplastic (519 aa).

This sequence belongs to the bacterial/plant glucose-1-phosphate adenylyltransferase family. Heterotetramer. In terms of tissue distribution, leaves and tubers.

It is found in the plastid. The protein resides in the chloroplast. Its subcellular location is the amyloplast. It catalyses the reaction alpha-D-glucose 1-phosphate + ATP + H(+) = ADP-alpha-D-glucose + diphosphate. It participates in glycan biosynthesis; starch biosynthesis. Its activity is regulated as follows. Activated by 3'phosphoglycerate, inhibited by orthophosphate. Allosteric regulation. Its function is as follows. This protein plays a role in synthesis of starch. It catalyzes the synthesis of the activated glycosyl donor, ADP-glucose from Glc-1-P and ATP. This is Glucose-1-phosphate adenylyltransferase large subunit 2, chloroplastic/amyloplastic (AGPS2) from Solanum tuberosum (Potato).